The sequence spans 90 residues: Probable Fe(2+)-trafficking protein (90 aa).

The protein belongs to the Fe(2+)-trafficking protein family.

Functionally, could be a mediator in iron transactions between iron acquisition and iron-requiring processes, such as synthesis and/or repair of Fe-S clusters in biosynthetic enzymes. The protein is Probable Fe(2+)-trafficking protein of Pseudomonas putida (strain ATCC 700007 / DSM 6899 / JCM 31910 / BCRC 17059 / LMG 24140 / F1).